A 454-amino-acid chain; its full sequence is GA-binding protein alpha chain (454 aa).

The 84-residue stretch at 168–251 folds into the PNT domain; it reads AALEGYRKEQ…SHLELLRKYV (84 aa). The disordered stretch occupies residues 295–316; it reads KVQRSPRISGEDRSSPGNRTGN. Phosphoserine is present on serine 303. Positions 320-400 form a DNA-binding region, ETS; it reads IQLWQFLLEL…QGKRFVYKFV (81 aa).

The protein belongs to the ETS family. As to quaternary structure, heterotetramer of two alpha and two beta subunits. In terms of tissue distribution, ubiquitous.

The protein resides in the nucleus. In terms of biological role, transcription factor capable of interacting with purine rich repeats (GA repeats). Positively regulates transcription of transcriptional repressor Rhit/Zpf13. The protein is GA-binding protein alpha chain (Gabpa) of Mus musculus (Mouse).